Reading from the N-terminus, the 461-residue chain is tRNA modification GTPase MnmE (461 aa).

R23, E88, and R127 together coordinate (6S)-5-formyl-5,6,7,8-tetrahydrofolate. A TrmE-type G domain is found at 223-382; that stretch reads GLSTVIVGKP…IEDALAEMVY (160 aa). N233 serves as a coordination point for K(+). Residues 233 to 238, 252 to 258, and 277 to 280 contribute to the GTP site; these read NVGKSS, TDVPGTT, and DTAG. Residue S237 coordinates Mg(2+). Residues T252, V254, and T257 each contribute to the K(+) site. Residue T258 participates in Mg(2+) binding. K461 is a (6S)-5-formyl-5,6,7,8-tetrahydrofolate binding site.

It belongs to the TRAFAC class TrmE-Era-EngA-EngB-Septin-like GTPase superfamily. TrmE GTPase family. In terms of assembly, homodimer. Heterotetramer of two MnmE and two MnmG subunits. It depends on K(+) as a cofactor.

It localises to the cytoplasm. Exhibits a very high intrinsic GTPase hydrolysis rate. Involved in the addition of a carboxymethylaminomethyl (cmnm) group at the wobble position (U34) of certain tRNAs, forming tRNA-cmnm(5)s(2)U34. The polypeptide is tRNA modification GTPase MnmE (Alkaliphilus oremlandii (strain OhILAs) (Clostridium oremlandii (strain OhILAs))).